Consider the following 331-residue polypeptide: Olfactory receptor 6K3 (331 aa).

The Extracellular segment spans residues 1–41; it reads MCWTMPSPFTGSSTRNMESGNQSTVTEFIFTGFPQLQDGSL. Asn-21 carries N-linked (GlcNAc...) asparagine glycosylation. The chain crosses the membrane as a helical span at residues 42 to 62; the sequence is LYFFPLLFIYTFIIIDNLLIF. Over 63–70 the chain is Cytoplasmic; that stretch reads SAVRLDTH. The chain crosses the membrane as a helical span at residues 71–91; it reads LHNPMYNFISIFSFLEIWYTT. Residues 92–115 lie on the Extracellular side of the membrane; that stretch reads ATIPKMLSNLISEKKAISMTGCIL. A disulfide bridge connects residues Cys-113 and Cys-205. The chain crosses the membrane as a helical span at residues 116–136; sequence QMYFFHSLENSEGILLTTMAI. Residues 137-155 are Cytoplasmic-facing; that stretch reads DRYVAICNPLRYQMIMTPR. Residues 156 to 176 form a helical membrane-spanning segment; the sequence is LCAQLSAGSCLFGFLILLPEI. At 177–212 the chain is on the extracellular side; sequence VMISTLPFCGPNQIHQIFCDLVPVLSLACTDTSMIL. A helical membrane pass occupies residues 213-232; it reads IEDVIHAVTIIITFLIIALS. Residues 233-252 are Cytoplasmic-facing; it reads YVRIVTVILRIPSSEGRQKA. A helical membrane pass occupies residues 253 to 273; the sequence is FSTCAGHLMVFPIFFGSVSLM. Residues 274–286 are Extracellular-facing; it reads YLRFSDTYPPVLD. The helical transmembrane segment at 287 to 307 threads the bilayer; sequence TAIALMFTVLAPFFNPIIYSL. At 308–331 the chain is on the cytoplasmic side; the sequence is RNKDMNNAIKKLFCLQKVLNKPGG.

The protein belongs to the G-protein coupled receptor 1 family.

Its subcellular location is the cell membrane. Odorant receptor. The protein is Olfactory receptor 6K3 (OR6K3) of Homo sapiens (Human).